A 215-amino-acid chain; its full sequence is Large ribosomal subunit protein eL14 (215 aa).

Residue Lys-79 is modified to N6-acetyllysine. Lys-85 carries the post-translational modification N6-acetyllysine; alternate. At Lys-85 the chain carries N6-succinyllysine; alternate. Lys-124 is covalently cross-linked (Glycyl lysine isopeptide (Lys-Gly) (interchain with G-Cter in SUMO2)). A Phosphoserine modification is found at Ser-139. The segment at 161–215 (VPAKKITAASKKAPAQKVPAQKATGQKAAPAPKAQKGQKAPAQKAPAPKASGKKA) is disordered. 6 tandem repeats follow at residues 171–175 (KKAPA), 176–180 (QKVPA), 181–185 (QKATG), 186–190 (QKAAP), 193–195 (KAQ), and 196–198 (KGQ). The tract at residues 171–190 (KKAPAQKVPAQKATGQKAAP) is 4 X 5 AA tandem repeats of Q-K-A-[PAS]-X. A 2 X 3 AA tandem repeats of K-[GA]-Q region spans residues 193-198 (KAQKGQ). N6-succinyllysine is present on Lys-204.

It belongs to the eukaryotic ribosomal protein eL14 family. Component of the large ribosomal subunit.

The protein resides in the cytoplasm. Its function is as follows. Component of the large ribosomal subunit. The ribosome is a large ribonucleoprotein complex responsible for the synthesis of proteins in the cell. This is Large ribosomal subunit protein eL14 (RPL14) from Homo sapiens (Human).